We begin with the raw amino-acid sequence, 87 residues long: Kappa-2-bungarotoxin (87 aa).

The N-terminal stretch at 1 to 21 (MKTLLLTLVVVTIVCLDLGYT) is a signal peptide. 5 cysteine pairs are disulfide-bonded: Cys24–Cys42, Cys35–Cys63, Cys48–Cys52, Cys67–Cys79, and Cys80–Cys85.

This sequence belongs to the three-finger toxin family. Long-chain subfamily. Kappa-neurotoxin sub-subfamily. In terms of assembly, homodimer and heterodimer with kappa 3-bungarotoxin; non-covalently linked. Expressed by the venom gland.

It localises to the secreted. Its function is as follows. Postsynaptic neurotoxin that binds and inhibits neuronal nicotinic acetylcholine receptors (nAChR) with high affinity (IC(50)&lt;100 nM). Is a selective, and slowly reversible antagonist of alpha-3/CHRNA3-containing and some alpha-4/CHRNA4-containing AChRs. The protein is Kappa-2-bungarotoxin of Bungarus multicinctus (Many-banded krait).